A 359-amino-acid polypeptide reads, in one-letter code: Biotin synthase (359 aa).

A disordered region spans residues 1–23; the sequence is MSVADSSAADSVAAPDTADTSSS. The Radical SAM core domain maps to 76–302; it reads YFGNTVQLYF…VNPDRELRIA (227 aa). 3 residues coordinate [4Fe-4S] cluster: Cys94, Cys98, and Cys101. The [2Fe-2S] cluster site is built by Cys138, Cys170, Cys230, and Arg300.

It belongs to the radical SAM superfamily. Biotin synthase family. As to quaternary structure, homodimer. [4Fe-4S] cluster is required as a cofactor. Requires [2Fe-2S] cluster as cofactor.

The catalysed reaction is (4R,5S)-dethiobiotin + (sulfur carrier)-SH + 2 reduced [2Fe-2S]-[ferredoxin] + 2 S-adenosyl-L-methionine = (sulfur carrier)-H + biotin + 2 5'-deoxyadenosine + 2 L-methionine + 2 oxidized [2Fe-2S]-[ferredoxin]. The protein operates within cofactor biosynthesis; biotin biosynthesis; biotin from 7,8-diaminononanoate: step 2/2. Functionally, catalyzes the conversion of dethiobiotin (DTB) to biotin by the insertion of a sulfur atom into dethiobiotin via a radical-based mechanism. This chain is Biotin synthase, found in Rhodopirellula baltica (strain DSM 10527 / NCIMB 13988 / SH1).